The primary structure comprises 458 residues: Bifunctional protein GlmU (458 aa).

A pyrophosphorylase region spans residues 1-229 (MNKFAIVLAA…FDESLGVNDR (229 aa)). UDP-N-acetyl-alpha-D-glucosamine-binding positions include 8 to 11 (LAAG), Lys-22, Gln-72, and 77 to 78 (GT). Mg(2+) is bound at residue Asp-102. The UDP-N-acetyl-alpha-D-glucosamine site is built by Gly-139, Glu-154, Asn-169, and Asn-227. Position 227 (Asn-227) interacts with Mg(2+). The tract at residues 230 to 250 (VALSQAEATMRKRINHEHMVN) is linker. The tract at residues 251–458 (GVTLIDPATT…AKKMPHYRGQ (208 aa)) is N-acetyltransferase. UDP-N-acetyl-alpha-D-glucosamine-binding residues include Arg-332 and Lys-350. The active-site Proton acceptor is the His-362. Residues Tyr-365 and Asn-376 each coordinate UDP-N-acetyl-alpha-D-glucosamine. The acetyl-CoA site is built by Ala-379, Ser-404, Ala-422, and Arg-439.

The protein in the N-terminal section; belongs to the N-acetylglucosamine-1-phosphate uridyltransferase family. It in the C-terminal section; belongs to the transferase hexapeptide repeat family. As to quaternary structure, homotrimer. Mg(2+) serves as cofactor.

It is found in the cytoplasm. The enzyme catalyses alpha-D-glucosamine 1-phosphate + acetyl-CoA = N-acetyl-alpha-D-glucosamine 1-phosphate + CoA + H(+). The catalysed reaction is N-acetyl-alpha-D-glucosamine 1-phosphate + UTP + H(+) = UDP-N-acetyl-alpha-D-glucosamine + diphosphate. It participates in nucleotide-sugar biosynthesis; UDP-N-acetyl-alpha-D-glucosamine biosynthesis; N-acetyl-alpha-D-glucosamine 1-phosphate from alpha-D-glucosamine 6-phosphate (route II): step 2/2. Its pathway is nucleotide-sugar biosynthesis; UDP-N-acetyl-alpha-D-glucosamine biosynthesis; UDP-N-acetyl-alpha-D-glucosamine from N-acetyl-alpha-D-glucosamine 1-phosphate: step 1/1. The protein operates within bacterial outer membrane biogenesis; LPS lipid A biosynthesis. Functionally, catalyzes the last two sequential reactions in the de novo biosynthetic pathway for UDP-N-acetylglucosamine (UDP-GlcNAc). The C-terminal domain catalyzes the transfer of acetyl group from acetyl coenzyme A to glucosamine-1-phosphate (GlcN-1-P) to produce N-acetylglucosamine-1-phosphate (GlcNAc-1-P), which is converted into UDP-GlcNAc by the transfer of uridine 5-monophosphate (from uridine 5-triphosphate), a reaction catalyzed by the N-terminal domain. This Lactococcus lactis subsp. cremoris (strain MG1363) protein is Bifunctional protein GlmU.